Here is a 513-residue protein sequence, read N- to C-terminus: Nitrate transporter 2.2 (513 aa).

12 consecutive transmembrane segments (helical) span residues 38 to 58 (WICF…APVI), 74 to 94 (VSAV…VDVV), 98 to 118 (YGAA…ALVT), 128 to 148 (FFIG…GTMF), 158 to 178 (AIAA…MPLI), 196 to 216 (AFFV…LLGI), 247 to 265 (LGNY…SFGV), 281 to 301 (FGLN…MNIF), 323 to 343 (LWVL…MGKV), 351 to 371 (IVIM…HFGI), 383 to 403 (VSGL…AIWF), and 419 to 439 (FVWM…IWFP).

It belongs to the major facilitator superfamily. Nitrate/nitrite porter (TC 2.A.1.8) family.

The protein localises to the cell membrane. In terms of biological role, involved in nitrate transport, but does not seem to be able to mediate transport by its own. Acts as a dual component transporter with NAR2 (system 2). Involved in a high affinity transport specific for nitrate. In Chlamydomonas reinhardtii (Chlamydomonas smithii), this protein is Nitrate transporter 2.2.